The following is an 838-amino-acid chain: Probable beta-glucosidase K (838 aa).

N-linked (GlcNAc...) asparagine glycosylation occurs at Asn-19. Asp-232 is an active-site residue. N-linked (GlcNAc...) asparagine glycosylation is found at Asn-324 and Asn-489. The region spanning 405–564 is the PA14 domain; it reads EGQPGLRMRF…DPELAIARAV (160 aa).

It belongs to the glycosyl hydrolase 3 family.

Its subcellular location is the secreted. It carries out the reaction Hydrolysis of terminal, non-reducing beta-D-glucosyl residues with release of beta-D-glucose.. The protein operates within glycan metabolism; cellulose degradation. Its function is as follows. Beta-glucosidases are one of a number of cellulolytic enzymes involved in the degradation of cellulosic biomass. Catalyzes the last step releasing glucose from the inhibitory cellobiose. The chain is Probable beta-glucosidase K (bglK) from Emericella nidulans (strain FGSC A4 / ATCC 38163 / CBS 112.46 / NRRL 194 / M139) (Aspergillus nidulans).